A 344-amino-acid chain; its full sequence is tRNA N6-adenosine threonylcarbamoyltransferase (344 aa).

Fe cation-binding residues include H111 and H115. Residues 136–140 (LVSGG), D169, G182, and N279 each bind substrate. Residue D307 coordinates Fe cation.

Belongs to the KAE1 / TsaD family. Fe(2+) is required as a cofactor.

The protein resides in the cytoplasm. The enzyme catalyses L-threonylcarbamoyladenylate + adenosine(37) in tRNA = N(6)-L-threonylcarbamoyladenosine(37) in tRNA + AMP + H(+). In terms of biological role, required for the formation of a threonylcarbamoyl group on adenosine at position 37 (t(6)A37) in tRNAs that read codons beginning with adenine. Is involved in the transfer of the threonylcarbamoyl moiety of threonylcarbamoyl-AMP (TC-AMP) to the N6 group of A37, together with TsaE and TsaB. TsaD likely plays a direct catalytic role in this reaction. The protein is tRNA N6-adenosine threonylcarbamoyltransferase of Mannheimia succiniciproducens (strain KCTC 0769BP / MBEL55E).